A 484-amino-acid chain; its full sequence is Protein DETOXIFICATION 33 (484 aa).

Positions 1–16 are enriched in basic and acidic residues; that stretch reads MGKDKTLPLLDPREPP. The tract at residues 1 to 22 is disordered; the sequence is MGKDKTLPLLDPREPPELTGTK. The next 12 helical transmembrane spans lie at 39–59, 81–101, 122–142, 155–175, 190–210, 218–238, 267–287, 294–314, 338–358, 380–400, 409–429, and 439–459; these read LWEL…LGAL, VISG…ETLC, VILF…PPIL, AGKF…NFPI, WISG…ILYF, AITL…YILI, ALML…TGLL, VDAI…SIGF, VIVV…VVLA, IAVL…LSGV, LVAY…GLVL, and GIWG…IGII.

Belongs to the multi antimicrobial extrusion (MATE) (TC 2.A.66.1) family.

The protein localises to the membrane. This Arabidopsis thaliana (Mouse-ear cress) protein is Protein DETOXIFICATION 33.